The chain runs to 113 residues: MAQQAKAHVKMQRVSVSKAKLVANLFRGKDATLALGILHNTPQKSAKIFIKLLNSAIANATNNHGMDASKLFVKEIHVNEGPTLKRFQPRSQGRAYEILKRTSHFSIILEERA.

It belongs to the universal ribosomal protein uL22 family. As to quaternary structure, part of the 50S ribosomal subunit.

Functionally, this protein binds specifically to 23S rRNA; its binding is stimulated by other ribosomal proteins, e.g. L4, L17, and L20. It is important during the early stages of 50S assembly. It makes multiple contacts with different domains of the 23S rRNA in the assembled 50S subunit and ribosome. In terms of biological role, the globular domain of the protein is located near the polypeptide exit tunnel on the outside of the subunit, while an extended beta-hairpin is found that lines the wall of the exit tunnel in the center of the 70S ribosome. In Mycoplasmopsis synoviae (strain 53) (Mycoplasma synoviae), this protein is Large ribosomal subunit protein uL22.